A 104-amino-acid chain; its full sequence is Integration host factor subunit alpha (104 aa).

Belongs to the bacterial histone-like protein family. Heterodimer of an alpha and a beta chain.

This protein is one of the two subunits of integration host factor, a specific DNA-binding protein that functions in genetic recombination as well as in transcriptional and translational control. This chain is Integration host factor subunit alpha, found in Methylobacterium sp. (strain 4-46).